We begin with the raw amino-acid sequence, 430 residues long: MDRIRIVGGNELNGIIPISGAKNAALPLMIASLLTSDTLTLENVPHLADVELLMRILGNHGVDVAVNGRRERQEDSYARTIHFTCRTIVDTTASYELVSKMRASFWVIGPLLAREGHCRVSLPGGCAIGTRPVDLFIEGLTALGATMEIDAGYINAKAPDGGLIGARYTFPKVSVGATHVLMMAATLARGTTVIGNAAREPEVVDLANCLNAMGAKISGAGTSTITIEGVTSLSGARHRVLPDRIETGTYAMAVAMAGGDVVLENTDVALLDTALETLRRAGADISATNNGMRVRRNGAGIKPVDIVTDPFPGFPTDLQAQFMALMTRSSGISHVTETIFENRFMHVQELARLGARISLSGQTAKIEGVERLRGAPVMATDLRASVSLVIAGLAAEGETTVSRVYHLDRGFERLEAKLTRCGAVVERISE.

A phosphoenolpyruvate-binding site is contributed by 22 to 23; the sequence is KN. Residue arginine 102 coordinates UDP-N-acetyl-alpha-D-glucosamine. Residue cysteine 126 is the Proton donor of the active site. At cysteine 126 the chain carries 2-(S-cysteinyl)pyruvic acid O-phosphothioketal. Residues 131-135, 172-175, aspartate 317, and isoleucine 339 contribute to the UDP-N-acetyl-alpha-D-glucosamine site; these read RPVDL and KVSV.

This sequence belongs to the EPSP synthase family. MurA subfamily.

Its subcellular location is the cytoplasm. The enzyme catalyses phosphoenolpyruvate + UDP-N-acetyl-alpha-D-glucosamine = UDP-N-acetyl-3-O-(1-carboxyvinyl)-alpha-D-glucosamine + phosphate. It participates in cell wall biogenesis; peptidoglycan biosynthesis. In terms of biological role, cell wall formation. Adds enolpyruvyl to UDP-N-acetylglucosamine. This Rhizobium etli (strain ATCC 51251 / DSM 11541 / JCM 21823 / NBRC 15573 / CFN 42) protein is UDP-N-acetylglucosamine 1-carboxyvinyltransferase.